Reading from the N-terminus, the 1094-residue chain is Transport and Golgi organization protein 6 homolog (1094 aa).

The helical transmembrane segment at 468–488 threads the bilayer; it reads LTVLMDSLLPVLGVLFLLYCF. A Phosphoserine modification is found at Ser-556. Basic and acidic residues predominate over residues 777-795; that stretch reads EEQQQTSHERPTDVAHSHL. Positions 777–834 are disordered; the sequence is EEQQQTSHERPTDVAHSHLEQQQSHETAPQTGLQSNAPIIPQGVNEPSTTTSQKSGSV. Composition is skewed to polar residues over residues 796-813 and 821-834; these read EQQQSHETAPQTGLQSNA and NEPSTTTSQKSGSV. HEAT repeat units follow at residues 873–909 and 952–988; these read LEMQEKLLKIFLENLEHEDTFVYLSAIQGVALLSDVY and SKYREPLIHTFLRGVRDPDGAHRASSLANLGELCQRL.

It belongs to the Tango6 family.

It localises to the membrane. This chain is Transport and Golgi organization protein 6 homolog (TANGO6), found in Homo sapiens (Human).